A 384-amino-acid polypeptide reads, in one-letter code: G protein-coupled receptor 88 (384 aa).

The Extracellular segment spans residues 1–35; the sequence is MTNSSSTSTSTTTGGSLLLLCEEEESWAGRRIPVS. N-linked (GlcNAc...) asparagine glycosylation occurs at asparagine 3. The helical transmembrane segment at 36-56 threads the bilayer; it reads LLYSGLAIGGTLANGMVIYLV. Residues 57-73 are Cytoplasmic-facing; sequence SSFRKLQTTSNAFIVNG. A helical membrane pass occupies residues 74 to 94; it reads CAADLSVCALWMPQEAVLGLL. Topologically, residues 95–116 are extracellular; it reads PSGSAEPPGDWDGGGGSYRLLR. The helical transmembrane segment at 117–136 threads the bilayer; sequence GGLLGLGLTVSLLSHCLVAL. At 137–158 the chain is on the cytoplasmic side; sequence NRYLLITRAPATYQVLYQRRHT. Residues 159–179 traverse the membrane as a helical segment; that stretch reads VGMLALSWALALGLVLLLPPW. The Extracellular portion of the chain corresponds to 180 to 195; it reads APKPGAEPPQVHYPAL. The chain crosses the membrane as a helical span at residues 196–216; the sequence is LAAGALLAQTALLLHCYLGIV. Topologically, residues 217-285 are cytoplasmic; that stretch reads RRVRVSVKRV…RAQRRLSGLS (69 aa). A helical membrane pass occupies residues 286–306; the sequence is VLLLCCVFLLATQPLVWVSLA. The Extracellular segment spans residues 307-310; it reads SGFS. The chain crosses the membrane as a helical span at residues 311 to 331; the sequence is LPVPWGVQAASWLLCCALSAL. The Cytoplasmic portion of the chain corresponds to 332–384; it reads NPLLYTWRNEEFRRSVRSVLPGVGDAAAAAAAATAVPAMSQAQLGTRAAGQHW.

This sequence belongs to the G-protein coupled receptor 1 family. As to expression, expressed predominantly in the striatum.

Its subcellular location is the cell membrane. The protein localises to the cell projection. The protein resides in the cilium membrane. It localises to the cytoplasm. It is found in the nucleus. Functionally, orphan G protein-coupled receptor implicated in a large repertoire of behavioral responses that engage motor activities, spatial learning, and emotional processing. May play a role in the regulation of cognitive and motor function. Couples with the heterotrimeric G protein complex of the G(i) subfamily, consisting of GNAI1, GNB1 and GNG2, thereby acting through a G(i)-mediated pathway. Plays a role in the attenuation of D1 dopamine receptor (D1R)-mediated cAMP response in ciliated cells. In on-ciliated cells, involved in the inhibition of the beta-2 adrenergic receptor (B2AR) response. The sequence is that of G protein-coupled receptor 88 (Gpr88) from Mus musculus (Mouse).